The primary structure comprises 586 residues: MKKSPSVLVIGGGSTGTGIARDLAMRGLDVTLVEKGNLTHGTTGRMHGLLHSGGRYAVSDQPSAKECIEENRVLRRIAGHCVEMTGGLFVQRPEDSDEYFEKKLEGCRECGIPAEVLSAEEAREIEPYLAKDIKRAIKVPDGAVDPFRLCVANAASAVEHGARIETHSEVTDVLVEGGEVVGVEVTHQTGTGPYVHGEPGEVEEIRADYVVNATGAWAGQIGDFAGVNVEVRPSKGVMTIMNTRQVDTVVNRCRPKGDADIIVPHETTCILGTTDEEVEDPEDYPEEGWEVDLMIETLSELVPMLADARTIRSFWGVRPLYEPPGTGTEDPTDITREFFLLDHADRDDLPGMTSIVGGKLTTYRMMAEQISDHVCEKLGVDAECRTADEPLPGSEDFTVLRDYMDDFGLRSPIGRRSAQRLGSRADEVLNSVDPNPVVCECEAVTRAEIQDALDTAGTDLNSVRIQTRASMGNCQGAICCHRMANELAPEYDEKTVRASLDDLYQERWKGERHAMWGTQLSQTALKHMLHAATMNRDEDPAAADADIDFAAFDDGVASGGAVADGGRERAADRADDDALGGADGDN.

Residue 6–34 (SVLVIGGGSTGTGIARDLAMRGLDVTLVE) participates in FAD binding. The tract at residues 559–586 (GGAVADGGRERAADRADDDALGGADGDN) is disordered. The span at 574–586 (ADDDALGGADGDN) shows a compositional bias: acidic residues.

It belongs to the FAD-dependent glycerol-3-phosphate dehydrogenase family. In terms of assembly, composed of a catalytic GlpA/B dimer and of membrane bound GlpC. It depends on FAD as a cofactor. Requires FMN as cofactor.

The protein localises to the cell membrane. It carries out the reaction a quinone + sn-glycerol 3-phosphate = dihydroxyacetone phosphate + a quinol. The protein operates within polyol metabolism; glycerol degradation via glycerol kinase pathway; glycerone phosphate from sn-glycerol 3-phosphate (anaerobic route): step 1/1. Up-regulated by glycerol and no inhibition by glucose. In terms of biological role, conversion of glycerol 3-phosphate to dihydroxyacetone phosphate. Required for growth on glycerol and for glycerol metabolism. The chain is Anaerobic glycerol-3-phosphate dehydrogenase subunit A1 (gpdA1) from Haloferax volcanii (strain ATCC 29605 / DSM 3757 / JCM 8879 / NBRC 14742 / NCIMB 2012 / VKM B-1768 / DS2) (Halobacterium volcanii).